A 1538-amino-acid chain; its full sequence is Pentafunctional AROM polypeptide (1538 aa).

Residues 1-384 are 3-dehydroquinate synthase; sequence MGVPTKISIL…HEPRASTVSN (384 aa). Residues 44 to 46, 81 to 84, 114 to 116, and Asp-119 each bind NAD(+); these read DTN, ESSK, and GGV. 7-phospho-2-dehydro-3-deoxy-D-arabino-heptonate is bound at residue Arg-130. NAD(+) is bound at residue 139-140; that stretch reads TT. 7-phospho-2-dehydro-3-deoxy-D-arabino-heptonate contacts are provided by Asp-146 and Lys-152. Position 161 (Lys-161) interacts with NAD(+). Asn-162 contributes to the 7-phospho-2-dehydro-3-deoxy-D-arabino-heptonate binding site. NAD(+) contacts are provided by residues 179-182 and Asn-190; that span reads FLNT. Glu-194 is a binding site for Zn(2+). 7-phospho-2-dehydro-3-deoxy-D-arabino-heptonate contacts are provided by residues 194 to 197 and Lys-250; that span reads EVIK. Residue Glu-260 is the Proton acceptor; for 3-dehydroquinate synthase activity of the active site. 7-phospho-2-dehydro-3-deoxy-D-arabino-heptonate is bound by residues 264–268 and His-271; that span reads RNLLN. Residue His-271 participates in Zn(2+) binding. His-275 functions as the Proton acceptor; for 3-dehydroquinate synthase activity in the catalytic mechanism. 7-phospho-2-dehydro-3-deoxy-D-arabino-heptonate is bound by residues His-287 and Lys-356. His-287 contacts Zn(2+). The interval 397–842 is EPSP synthase; it reads VSPGVPKGLD…WDCLSQTFKV (446 aa). Catalysis depends on Cys-824, which acts as the For EPSP synthase activity. The tract at residues 866–973 is shikimate kinase; that stretch reads ASIFIIGMRG…RRKQNTFFVS (108 aa). 872–879 provides a ligand contact to ATP; it reads GMRGAGKT. Residues 974–1194 are 3-dehydroquinase; the sequence is LTLPDLGLAA…AAPGQLSARE (221 aa). His-1097 (proton acceptor; for 3-dehydroquinate dehydratase activity) is an active-site residue. Lys-1125 (schiff-base intermediate with substrate; for 3-dehydroquinate dehydratase activity) is an active-site residue. Residues 1207-1538 form a shikimate dehydrogenase region; it reads AKKFAVIGNP…YEHPVLNHSS (332 aa).

The protein in the N-terminal section; belongs to the sugar phosphate cyclases superfamily. Dehydroquinate synthase family. In the 2nd section; belongs to the EPSP synthase family. This sequence in the 3rd section; belongs to the shikimate kinase family. It in the 4th section; belongs to the type-I 3-dehydroquinase family. The protein in the C-terminal section; belongs to the shikimate dehydrogenase family. As to quaternary structure, homodimer. Requires Zn(2+) as cofactor.

It localises to the cytoplasm. It catalyses the reaction 7-phospho-2-dehydro-3-deoxy-D-arabino-heptonate = 3-dehydroquinate + phosphate. It carries out the reaction 3-dehydroquinate = 3-dehydroshikimate + H2O. The catalysed reaction is shikimate + NADP(+) = 3-dehydroshikimate + NADPH + H(+). The enzyme catalyses shikimate + ATP = 3-phosphoshikimate + ADP + H(+). It catalyses the reaction 3-phosphoshikimate + phosphoenolpyruvate = 5-O-(1-carboxyvinyl)-3-phosphoshikimate + phosphate. It participates in metabolic intermediate biosynthesis; chorismate biosynthesis; chorismate from D-erythrose 4-phosphate and phosphoenolpyruvate: step 2/7. It functions in the pathway metabolic intermediate biosynthesis; chorismate biosynthesis; chorismate from D-erythrose 4-phosphate and phosphoenolpyruvate: step 3/7. The protein operates within metabolic intermediate biosynthesis; chorismate biosynthesis; chorismate from D-erythrose 4-phosphate and phosphoenolpyruvate: step 4/7. Its pathway is metabolic intermediate biosynthesis; chorismate biosynthesis; chorismate from D-erythrose 4-phosphate and phosphoenolpyruvate: step 5/7. It participates in metabolic intermediate biosynthesis; chorismate biosynthesis; chorismate from D-erythrose 4-phosphate and phosphoenolpyruvate: step 6/7. The AROM polypeptide catalyzes 5 consecutive enzymatic reactions in prechorismate polyaromatic amino acid biosynthesis. This is Pentafunctional AROM polypeptide from Ajellomyces capsulatus (strain NAm1 / WU24) (Darling's disease fungus).